A 505-amino-acid chain; its full sequence is ATP synthase subunit beta, mitochondrial (505 aa).

184-191 (GGAGVGKT) contributes to the ATP binding site.

Belongs to the ATPase alpha/beta chains family. In terms of assembly, F-type ATPases have 2 components, CF(1) - the catalytic core - and CF(0) - the membrane proton channel. CF(1) has five subunits: alpha(3), beta(3), gamma(1), delta(1), epsilon(1). CF(0) has three main subunits: a, b and c.

The protein localises to the mitochondrion. The protein resides in the mitochondrion inner membrane. It carries out the reaction ATP + H2O + 4 H(+)(in) = ADP + phosphate + 5 H(+)(out). Mitochondrial membrane ATP synthase (F(1)F(0) ATP synthase or Complex V) produces ATP from ADP in the presence of a proton gradient across the membrane which is generated by electron transport complexes of the respiratory chain. F-type ATPases consist of two structural domains, F(1) - containing the extramembraneous catalytic core, and F(0) - containing the membrane proton channel, linked together by a central stalk and a peripheral stalk. During catalysis, ATP synthesis in the catalytic domain of F(1) is coupled via a rotary mechanism of the central stalk subunits to proton translocation. Subunits alpha and beta form the catalytic core in F(1). Rotation of the central stalk against the surrounding alpha(3)beta(3) subunits leads to hydrolysis of ATP in three separate catalytic sites on the beta subunits. In Kluyveromyces lactis (strain ATCC 8585 / CBS 2359 / DSM 70799 / NBRC 1267 / NRRL Y-1140 / WM37) (Yeast), this protein is ATP synthase subunit beta, mitochondrial (ATP2).